Reading from the N-terminus, the 671-residue chain is DNA ligase (671 aa).

Residues 32–36 (DAEYD), 81–82 (SL), and glutamate 113 each bind NAD(+). Residue lysine 115 is the N6-AMP-lysine intermediate of the active site. 4 residues coordinate NAD(+): arginine 136, glutamate 173, lysine 290, and lysine 314. Cysteine 408, cysteine 411, cysteine 426, and cysteine 432 together coordinate Zn(2+). A BRCT domain is found at 593–671 (EIDSPFAGKT…EAEMIRLLGA (79 aa)).

It belongs to the NAD-dependent DNA ligase family. LigA subfamily. Mg(2+) is required as a cofactor. It depends on Mn(2+) as a cofactor.

The catalysed reaction is NAD(+) + (deoxyribonucleotide)n-3'-hydroxyl + 5'-phospho-(deoxyribonucleotide)m = (deoxyribonucleotide)n+m + AMP + beta-nicotinamide D-nucleotide.. Its function is as follows. DNA ligase that catalyzes the formation of phosphodiester linkages between 5'-phosphoryl and 3'-hydroxyl groups in double-stranded DNA using NAD as a coenzyme and as the energy source for the reaction. It is essential for DNA replication and repair of damaged DNA. The sequence is that of DNA ligase from Salmonella typhimurium (strain LT2 / SGSC1412 / ATCC 700720).